Consider the following 373-residue polypeptide: MPDLKRAIGLMSGTSMDGIDIALLATDGENWIERRASASMDYSDGFRARLKAGLVDARAIKDRAERPGLLRQLEHDLTLLHAVAVHDFLHEQGLQPHEIDVIGFHGQTVLHRPNESLTVQIGDGALLARETGIPVVYDMRAEDMRHGGQGAPLIPAYHAALAANLPLGLKGPVVFVNIGGISNLTYVGEDGALIAYDSGPGNMLIDQWMELHGHGRFDPGGATAMSGSVDRNTAHRYLEHEFFKGNHRRSLDRGDFAIPAKGELNLADGARTLAFVSAAAILKSASHLPARPRTYVVSGGGRKNGALMDELTALAEREGAHVIDADNAGFDGDAMEAEAWAYLAVRSLCGLPLTYPSTTGCDKPVSGGVPVRP.

An ATP-binding site is contributed by glycine 13–aspartate 20.

It belongs to the anhydro-N-acetylmuramic acid kinase family.

It catalyses the reaction 1,6-anhydro-N-acetyl-beta-muramate + ATP + H2O = N-acetyl-D-muramate 6-phosphate + ADP + H(+). It functions in the pathway amino-sugar metabolism; 1,6-anhydro-N-acetylmuramate degradation. Its pathway is cell wall biogenesis; peptidoglycan recycling. Its function is as follows. Catalyzes the specific phosphorylation of 1,6-anhydro-N-acetylmuramic acid (anhMurNAc) with the simultaneous cleavage of the 1,6-anhydro ring, generating MurNAc-6-P. Is required for the utilization of anhMurNAc either imported from the medium or derived from its own cell wall murein, and thus plays a role in cell wall recycling. The polypeptide is Anhydro-N-acetylmuramic acid kinase (Brucella abortus (strain 2308)).